Consider the following 446-residue polypeptide: Xylose isomerase 2 (446 aa).

Catalysis depends on residues His109 and Asp112. Residues Glu240, Glu276, His279, Asp304, Asp315, Asp317, and Asp347 each coordinate Mg(2+).

Belongs to the xylose isomerase family. In terms of assembly, homotetramer. Mg(2+) is required as a cofactor.

It localises to the cytoplasm. It catalyses the reaction alpha-D-xylose = alpha-D-xylulofuranose. The polypeptide is Xylose isomerase 2 (Xanthomonas campestris pv. campestris (strain 8004)).